A 134-amino-acid chain; its full sequence is Profilin-3 (134 aa).

A disulfide bridge connects residues Cys-13 and Cys-118. The Involved in PIP2 interaction motif lies at 84 to 100 (AVIRGKKGSGGITIKKT). Position 114 is a phosphothreonine (Thr-114).

It belongs to the profilin family. Occurs in many kinds of cells as a complex with monomeric actin in a 1:1 ratio. Post-translationally, phosphorylated by MAP kinases.

Its subcellular location is the cytoplasm. It is found in the cytoskeleton. Its function is as follows. Binds to actin and affects the structure of the cytoskeleton. At high concentrations, profilin prevents the polymerization of actin, whereas it enhances it at low concentrations. The polypeptide is Profilin-3 (Olea europaea (Common olive)).